Reading from the N-terminus, the 323-residue chain is ComG operon protein 2 (323 aa).

A run of 3 helical transmembrane segments spans residues 93 to 113, 143 to 163, and 296 to 316; these read YPLF…SIII, LVII…WLVF, and MIYG…LVPM.

It belongs to the GSP F family.

The protein localises to the cell membrane. Its function is as follows. Required for transformation and DNA binding. The polypeptide is ComG operon protein 2 (comGB) (Bacillus subtilis (strain 168)).